A 295-amino-acid chain; its full sequence is Protein LplC (295 aa).

6 helical membrane-spanning segments follow: residues I21 to G41, V81 to A101, L116 to V136, L142 to I162, V199 to L219, and G260 to L280. The ABC transmembrane type-1 domain occupies M79 to L280.

It belongs to the binding-protein-dependent transport system permease family. CysTW subfamily.

The protein localises to the cell membrane. In Bacillus subtilis (strain 168), this protein is Protein LplC (lplC).